We begin with the raw amino-acid sequence, 964 residues long: MAKVRVYELAKELGLSSKQLLGKLNDMGEFVRSASSTIEAPVVRRLRDQIGSAEPADDAKAAKPAARKSQTSSKKTSKETTTAKPAPGPKPGPGPKPTPGPRPGSSSGPKPGRSSAARTSATPRPGLIKSSGASSQQEPPAAKPESKPTPKPGQNVPKPHAPAPKPKPGAPSKSPKPGARPGPRPGGSAGLPSAARPGPRPGAGRRTGAPRPGNNPFASSQGMGQSRHRSEGGQRSGGSRSGQGERMPRPGGSQGSRGGSGMPRPNPAMMPKHQSSQIGQATTGRGGRGGGRGRGGSRGSGFGGGFGGGPRGPIGGGRGGRGGRGTQGAFGRGGGGRRGRKSRKQRRQEFDEMQAPLVGGVRVRKGNGETVRLRRGASLTDLAEKINAEPAQLVQVLFNLGEMVTATQSVSDDTLEILGGELNYQIQVVSPEDEDRELLESFDLEFGEDEGDDSDLVARPPVVTVMGHVDHGKTKLLDALRHTDVVKGEAGGITQAIGAYQVQTEVDDAERAITFIDTPGHEAFTAMRARGAQSTDIAVLVVAADDGVMPQTVEALNHAKAADVPIVVAVNKIDKPEADPDKVRGQLTEYGLVPEEYGGDTMFVNVSARTHEGLDDLLEAIVLTADAALDLRANPDMAAQGVAIEAHLDKGRGPVATALIQRGTLHIGDSIVAGSSYGRVRAMINDQGESVDEAAPATPVQVLGLTSVPGAGDNFLVVDDDRKARQIAEKREARMRAAQQARSSRRKTLDQLFEQLEKGETEELLLILKGDGAGSVEALEDALAKIDVGDEVDLRVIDRGVGAITETNVSLAAASNAVIVGFNVRPTAHAQRMADEENVDIRYYSVIYDAIDEIEAALRGMLKPIYEEKAMGTAEIRQIFRSSKVGTIAGCMITDGTIRRHAKARLVRDGVVVQETEINTLQREKDAVTEVREGYECGLTLTNYSDIHVGDEVQCYEMVEKPRD.

Positions 49–357 are disordered; it reads QIGSAEPADD…QEFDEMQAPL (309 aa). Over residues 62–85 the composition is skewed to low complexity; that stretch reads AKPAARKSQTSSKKTSKETTTAKP. Residues 86–102 are compositionally biased toward pro residues; it reads APGPKPGPGPKPTPGPR. Residues 103–117 are compositionally biased toward low complexity; the sequence is PGSSSGPKPGRSSAA. The segment covering 159 to 169 has biased composition (pro residues); sequence PHAPAPKPKPG. Composition is skewed to low complexity over residues 190–212 and 242–251; these read GLPS…APRP and GQGERMPRPG. Composition is skewed to gly residues over residues 252 to 261 and 284 to 334; these read GSQGSRGGSG and GRGG…GRGG. Over residues 335-346 the composition is skewed to basic residues; it reads GGRRGRKSRKQR. A tr-type G domain is found at 458-629; it reads ARPPVVTVMG…AIVLTADAAL (172 aa). Residues 467 to 474 are G1; the sequence is GHVDHGKT. Position 467-474 (467-474) interacts with GTP; it reads GHVDHGKT. Residues 492–496 are G2; the sequence is GITQA. The tract at residues 517-520 is G3; that stretch reads DTPG. Residues 517 to 521 and 571 to 574 each bind GTP; these read DTPGH and NKID. Residues 571–574 form a G4 region; it reads NKID. The G5 stretch occupies residues 607 to 609; it reads SAR.

The protein belongs to the TRAFAC class translation factor GTPase superfamily. Classic translation factor GTPase family. IF-2 subfamily.

It is found in the cytoplasm. Its function is as follows. One of the essential components for the initiation of protein synthesis. Protects formylmethionyl-tRNA from spontaneous hydrolysis and promotes its binding to the 30S ribosomal subunits. Also involved in the hydrolysis of GTP during the formation of the 70S ribosomal complex. This chain is Translation initiation factor IF-2, found in Cutibacterium acnes (strain DSM 16379 / KPA171202) (Propionibacterium acnes).